The sequence spans 116 residues: Ribosome-binding factor A (116 aa).

It belongs to the RbfA family. Monomer. Binds 30S ribosomal subunits, but not 50S ribosomal subunits or 70S ribosomes.

It localises to the cytoplasm. In terms of biological role, one of several proteins that assist in the late maturation steps of the functional core of the 30S ribosomal subunit. Associates with free 30S ribosomal subunits (but not with 30S subunits that are part of 70S ribosomes or polysomes). Required for efficient processing of 16S rRNA. May interact with the 5'-terminal helix region of 16S rRNA. The polypeptide is Ribosome-binding factor A (Staphylococcus aureus (strain JH9)).